Reading from the N-terminus, the 94-residue chain is Co-chaperonin GroES (94 aa).

The protein belongs to the GroES chaperonin family. Heptamer of 7 subunits arranged in a ring. Interacts with the chaperonin GroEL.

The protein resides in the cytoplasm. In terms of biological role, together with the chaperonin GroEL, plays an essential role in assisting protein folding. The GroEL-GroES system forms a nano-cage that allows encapsulation of the non-native substrate proteins and provides a physical environment optimized to promote and accelerate protein folding. GroES binds to the apical surface of the GroEL ring, thereby capping the opening of the GroEL channel. In Lactobacillus acidophilus (strain ATCC 700396 / NCK56 / N2 / NCFM), this protein is Co-chaperonin GroES.